A 558-amino-acid chain; its full sequence is Probable rhamnogalacturonase B (558 aa).

Positions 1–21 are cleaved as a signal peptide; the sequence is MLLDKLSVLSFLGLAPIFAAA. Cysteines 42 and 68 form a disulfide. Asparagine 145 is a glycosylation site (N-linked (GlcNAc...) asparagine). Aspartate 219 acts as the Proton donor in catalysis. A disulfide bridge connects residues cysteine 221 and cysteine 238. N-linked (GlcNAc...) asparagine glycosylation is found at asparagine 239 and asparagine 254. Histidine 294 is an active-site residue. An N-linked (GlcNAc...) asparagine glycan is attached at asparagine 321. 2 disulfide bridges follow: cysteine 344/cysteine 350 and cysteine 372/cysteine 381. The segment covering 503-526 has biased composition (low complexity); sequence VGAQEGSTTSAPSFAAPSGAGNSP. Residues 503–558 form a disordered region; that stretch reads VGAQEGSTTSAPSFAAPSGAGNSPQGPTGASGFGEKGQQGEQGEQGEQGEQGVCYV.

The protein belongs to the glycosyl hydrolase 28 family.

It localises to the secreted. The catalysed reaction is Endohydrolysis of alpha-D-GalA-(1-&gt;2)-alpha-L-Rha glycosidic bond in the rhamnogalacturonan I backbone with initial inversion of anomeric configuration releasing oligosaccharides with beta-D-GalA at the reducing end.. In terms of biological role, pectinolytic enzymes consist of four classes of enzymes: pectine lyase, polygalacturonase, pectin methylesterase and rhamnogalacturonase. Hydrolyzes alpha-D-galacturonopyranosyl-(1,2)-alpha-L-rhamnopyranosyl linkages in the backbone of the hairy regions of pectins. The protein is Probable rhamnogalacturonase B (rhgB) of Aspergillus niger (strain ATCC MYA-4892 / CBS 513.88 / FGSC A1513).